Here is a 284-residue protein sequence, read N- to C-terminus: 2-dehydro-3-deoxyphosphooctonate aldolase (284 aa).

This sequence belongs to the KdsA family.

Its subcellular location is the cytoplasm. The enzyme catalyses D-arabinose 5-phosphate + phosphoenolpyruvate + H2O = 3-deoxy-alpha-D-manno-2-octulosonate-8-phosphate + phosphate. It participates in carbohydrate biosynthesis; 3-deoxy-D-manno-octulosonate biosynthesis; 3-deoxy-D-manno-octulosonate from D-ribulose 5-phosphate: step 2/3. It functions in the pathway bacterial outer membrane biogenesis; lipopolysaccharide biosynthesis. The protein is 2-dehydro-3-deoxyphosphooctonate aldolase of Serratia proteamaculans (strain 568).